The chain runs to 417 residues: uncharacterized protein (417 aa).

Disordered stretches follow at residues M1 to A41 and Q233 to S262. Over residues D31–A41 the composition is skewed to basic and acidic residues. Over residues S235 to S245 the composition is skewed to polar residues.

This is an uncharacterized protein from Caenorhabditis elegans.